The following is a 63-amino-acid chain: Large ribosomal subunit protein uL29 (63 aa).

Belongs to the universal ribosomal protein uL29 family.

The polypeptide is Large ribosomal subunit protein uL29 (Escherichia coli O8 (strain IAI1)).